Consider the following 94-residue polypeptide: Co-chaperonin GroES (94 aa).

The protein belongs to the GroES chaperonin family. In terms of assembly, heptamer of 7 subunits arranged in a ring. Interacts with the chaperonin GroEL.

The protein resides in the cytoplasm. In terms of biological role, together with the chaperonin GroEL, plays an essential role in assisting protein folding. The GroEL-GroES system forms a nano-cage that allows encapsulation of the non-native substrate proteins and provides a physical environment optimized to promote and accelerate protein folding. GroES binds to the apical surface of the GroEL ring, thereby capping the opening of the GroEL channel. This is Co-chaperonin GroES from Listeria innocua serovar 6a (strain ATCC BAA-680 / CLIP 11262).